Here is a 153-residue protein sequence, read N- to C-terminus: L-alanine exporter AlaE (153 aa).

Transmembrane regions (helical) follow at residues 16–36 (VAMV…LSEM), 42–62 (LSSR…YGLY), 86–106 (LFAY…AIGA), and 114–134 (AVGS…YFLE).

This sequence belongs to the AlaE exporter family.

It is found in the cell inner membrane. Its function is as follows. Exports L-alanine. The polypeptide is L-alanine exporter AlaE (Musicola paradisiaca (strain Ech703) (Dickeya paradisiaca)).